Here is a 90-residue protein sequence, read N- to C-terminus: Putative protein p49 (90 aa).

In Escherichia coli (Bacteriophage APSE-1), this protein is Putative protein p49 (49).